The chain runs to 214 residues: Cell division protein DamX (214 aa).

2 stretches are compositionally biased toward polar residues: residues 1-14 and 43-53; these read GSGT…QPQQ and QGMTGAASTLP. The disordered stretch occupies residues 1 to 133; that stretch reads GSGTPTEAQT…SVQSAPGSHY (133 aa). The chain crosses the membrane as a helical span at residues 44 to 65; sequence GMTGAASTLPTAPATVMSGAAA. Composition is skewed to low complexity over residues 78–97 and 110–131; these read QQHK…TQHK and SSTA…APGS. The region spanning 127-204 is the SPOR domain; the sequence is SAPGSHYTLQ…VQAKKPWVRP (78 aa).

The protein belongs to the DamX family.

It localises to the cell inner membrane. Functionally, non-essential cell division protein. In Serratia marcescens, this protein is Cell division protein DamX.